The chain runs to 507 residues: Desmethyl-deoxy-podophyllotoxin synthase (507 aa).

Residues 1 to 21 (MEFLSFPLSSALLIILLFMLV) traverse the membrane as a helical segment. Cysteine 440 is a heme binding site.

Belongs to the cytochrome P450 family. Heme serves as cofactor. Rhizome-specific expression.

The protein localises to the membrane. The enzyme catalyses (-)-deoxypodophyllotoxin + reduced [NADPH--hemoprotein reductase] + O2 = (-)-4'-desmethyl-deoxypodophyllotoxin + formaldehyde + oxidized [NADPH--hemoprotein reductase] + H2O + H(+). It functions in the pathway aromatic compound metabolism; phenylpropanoid biosynthesis. In terms of biological role, cytochrome P450 involved in the biosynthesis of etoposide, a chemotherapeutic compound of the topoisomerase inhibitor family. Catalyzes the conversion of deoxypodophyllotoxin to desmethyl-deoxypodophyllotoxin. This chain is Desmethyl-deoxy-podophyllotoxin synthase, found in Sinopodophyllum hexandrum (Himalayan may apple).